A 232-amino-acid polypeptide reads, in one-letter code: Orotidine 5'-phosphate decarboxylase (232 aa).

Residues Asp-13, Lys-35, 62 to 71, Thr-122, Arg-182, Gln-191, Gly-211, and Arg-212 contribute to the substrate site; that span reads DLKFHDIPNT. The Proton donor role is filled by Lys-64.

The protein belongs to the OMP decarboxylase family. Type 1 subfamily. As to quaternary structure, homodimer.

The catalysed reaction is orotidine 5'-phosphate + H(+) = UMP + CO2. Its pathway is pyrimidine metabolism; UMP biosynthesis via de novo pathway; UMP from orotate: step 2/2. Catalyzes the decarboxylation of orotidine 5'-monophosphate (OMP) to uridine 5'-monophosphate (UMP). This Pseudomonas fluorescens (strain SBW25) protein is Orotidine 5'-phosphate decarboxylase.